The chain runs to 251 residues: MSDSNLDGVLVLIPARMASTRLPGKPLADICGLPMIVQVAMRAREAAIGRVVVAVDETRVFDAVAAAGFEVVMTRVDHQSGSDRIFEALTKVDPEGKAKIIVNIQGDLPTIDPETVRAALRPLENEAVDIGTLTTEIDNEEDKTAPHIVKIIGSPISGNRLHALYFTRATAPYGQGPLYHHIGLYAYRRAALERFVSLGPSTLEKRESLEQLRALEAGMRIDAEVVDTVPLGVDTPADLEKARRILSAKSN.

It belongs to the KdsB family.

The protein resides in the cytoplasm. The catalysed reaction is 3-deoxy-alpha-D-manno-oct-2-ulosonate + CTP = CMP-3-deoxy-beta-D-manno-octulosonate + diphosphate. The protein operates within nucleotide-sugar biosynthesis; CMP-3-deoxy-D-manno-octulosonate biosynthesis; CMP-3-deoxy-D-manno-octulosonate from 3-deoxy-D-manno-octulosonate and CTP: step 1/1. It functions in the pathway bacterial outer membrane biogenesis; lipopolysaccharide biosynthesis. Activates KDO (a required 8-carbon sugar) for incorporation into bacterial lipopolysaccharide in Gram-negative bacteria. The sequence is that of 3-deoxy-manno-octulosonate cytidylyltransferase from Rhizobium johnstonii (strain DSM 114642 / LMG 32736 / 3841) (Rhizobium leguminosarum bv. viciae).